The primary structure comprises 325 residues: Ribonuclease Z (325 aa).

Positions 63, 65, 67, 68, 147, 218, and 276 each coordinate Zn(2+). Residue Asp67 is the Proton acceptor of the active site.

This sequence belongs to the RNase Z family. In terms of assembly, homodimer. Zn(2+) is required as a cofactor.

It carries out the reaction Endonucleolytic cleavage of RNA, removing extra 3' nucleotides from tRNA precursor, generating 3' termini of tRNAs. A 3'-hydroxy group is left at the tRNA terminus and a 5'-phosphoryl group is left at the trailer molecule.. Zinc phosphodiesterase, which displays some tRNA 3'-processing endonuclease activity. Probably involved in tRNA maturation, by removing a 3'-trailer from precursor tRNA. This Oenococcus oeni (strain ATCC BAA-331 / PSU-1) protein is Ribonuclease Z.